Reading from the N-terminus, the 484-residue chain is UDP-N-acetylmuramate--L-alanine ligase (484 aa).

Residue 123–129 participates in ATP binding; that stretch reads GTHGKTT.

This sequence belongs to the MurCDEF family.

It is found in the cytoplasm. The enzyme catalyses UDP-N-acetyl-alpha-D-muramate + L-alanine + ATP = UDP-N-acetyl-alpha-D-muramoyl-L-alanine + ADP + phosphate + H(+). It functions in the pathway cell wall biogenesis; peptidoglycan biosynthesis. Functionally, cell wall formation. This chain is UDP-N-acetylmuramate--L-alanine ligase, found in Pseudomonas fluorescens (strain ATCC BAA-477 / NRRL B-23932 / Pf-5).